Consider the following 571-residue polypeptide: Methionine--tRNA ligase (571 aa).

A 'HIGH' region motif is present at residues 10 to 20; that stretch reads PYVNAVPHLGN. Zn(2+) contacts are provided by cysteine 143, cysteine 146, cysteine 156, and cysteine 159. The 'KMSKS' region signature appears at 333-337; that stretch reads KFSKS. Lysine 336 serves as a coordination point for ATP.

The protein belongs to the class-I aminoacyl-tRNA synthetase family. MetG type 1 subfamily. The cofactor is Zn(2+).

Its subcellular location is the cytoplasm. The catalysed reaction is tRNA(Met) + L-methionine + ATP = L-methionyl-tRNA(Met) + AMP + diphosphate. Functionally, is required not only for elongation of protein synthesis but also for the initiation of all mRNA translation through initiator tRNA(fMet) aminoacylation. In Sulfolobus acidocaldarius (strain ATCC 33909 / DSM 639 / JCM 8929 / NBRC 15157 / NCIMB 11770), this protein is Methionine--tRNA ligase.